Consider the following 194-residue polypeptide: uncharacterized protein (194 aa).

This is an uncharacterized protein from Aquifex aeolicus (strain VF5).